A 309-amino-acid polypeptide reads, in one-letter code: Sulfate adenylyltransferase subunit 2 (309 aa).

It belongs to the PAPS reductase family. CysD subfamily. Heterodimer composed of CysD, the smaller subunit, and CysN.

The enzyme catalyses sulfate + ATP + H(+) = adenosine 5'-phosphosulfate + diphosphate. The protein operates within sulfur metabolism; hydrogen sulfide biosynthesis; sulfite from sulfate: step 1/3. Functionally, with CysN forms the ATP sulfurylase (ATPS) that catalyzes the adenylation of sulfate producing adenosine 5'-phosphosulfate (APS) and diphosphate, the first enzymatic step in sulfur assimilation pathway. APS synthesis involves the formation of a high-energy phosphoric-sulfuric acid anhydride bond driven by GTP hydrolysis by CysN coupled to ATP hydrolysis by CysD. The polypeptide is Sulfate adenylyltransferase subunit 2 (Methylorubrum extorquens (strain CM4 / NCIMB 13688) (Methylobacterium extorquens)).